We begin with the raw amino-acid sequence, 1168 residues long: Probable serine/threonine protein kinase IRE (1168 aa).

Disordered regions lie at residues 1 to 165 (MSTT…GVES) and 377 to 444 (EKQN…KIQP). The segment covering 16-25 (PTTISTPTST) has biased composition (low complexity). Basic and acidic residues-rich tracts occupy residues 39–54 (RHSDKEGEDEQAKTDE) and 107–130 (QDDKDVAKEKPRVGVVDARADARA). 2 stretches are compositionally biased toward polar residues: residues 146-163 (QWSQSKSQRVPANSNPGV) and 401-414 (TARSTDSTSSNFRM). The segment at 488-507 (CRICEVEIPVVHVEEHSRIC) adopts a C2H2-type; atypical zinc-finger fold. Disordered stretches follow at residues 546–566 (PRAVADSARLSNSSRQEDLDE), 602–622 (GTKDSSAGSLTPPSPATPRNS), and 717–744 (SSNAMPDEESSADEDTVRSLRASPLNPR). The Protein kinase domain occupies 754–1043 (FEIIKPISRG…AGEVKQHHFF (290 aa)). Residues 760–768 (ISRGAFGRV) and Lys783 each bind ATP. Catalysis depends on Asp877, which acts as the Proton acceptor. An AGC-kinase C-terminal domain is found at 1044–1144 (KDINWDTLAR…KNLSQLASIN (101 aa)).

Belongs to the protein kinase superfamily. AGC Ser/Thr protein kinase family. Highly expressed in roots, elongating root hair cells and pollen grains.

The catalysed reaction is L-seryl-[protein] + ATP = O-phospho-L-seryl-[protein] + ADP + H(+). The enzyme catalyses L-threonyl-[protein] + ATP = O-phospho-L-threonyl-[protein] + ADP + H(+). Its function is as follows. Modulates root tip growth. May play a common role in the tip growth of plant cells. The sequence is that of Probable serine/threonine protein kinase IRE from Arabidopsis thaliana (Mouse-ear cress).